Reading from the N-terminus, the 380-residue chain is UDP-N-acetylglucosamine 2-epimerase (380 aa).

This sequence belongs to the UDP-N-acetylglucosamine 2-epimerase family.

It localises to the cytoplasm. It catalyses the reaction UDP-N-acetyl-alpha-D-glucosamine = UDP-N-acetyl-alpha-D-mannosamine. It participates in cell wall biogenesis; poly(glycerol phosphate) teichoic acid biosynthesis. In terms of biological role, catalyzes the conversion of UDP-N-acetylglucosamine into UDP-N-acetylmannosamine, a precursor of the teichoic acid linkage unit. This chain is UDP-N-acetylglucosamine 2-epimerase (mnaA), found in Bacillus subtilis (strain 168).